Reading from the N-terminus, the 789-residue chain is Ribonucleoside-diphosphate reductase large subunit (789 aa).

Substrate is bound by residues Thr-207, 222-223, Gly-253, 435-439, and 620-624; these read SC, NLCTE, and PTVSS. An intrachain disulfide couples Cys-223 to Cys-452. Residue Asn-435 is the Proton acceptor of the active site. The active-site Cysteine radical intermediate is the Cys-437. The Proton acceptor role is filled by Glu-439.

The protein belongs to the ribonucleoside diphosphate reductase large chain family. In terms of assembly, heterotetramer composed of a homodimer of the large subunit (R1) and a homodimer of the small subunit (R2). Larger multisubunit protein complex are also active, composed of (R1)n(R2)n.

It catalyses the reaction a 2'-deoxyribonucleoside 5'-diphosphate + [thioredoxin]-disulfide + H2O = a ribonucleoside 5'-diphosphate + [thioredoxin]-dithiol. In terms of biological role, ribonucleoside-diphosphate reductase holoenzyme provides the precursors necessary for viral DNA synthesis. Allows virus growth in non-dividing cells, as well as reactivation from latency in infected hosts. Catalyzes the biosynthesis of deoxyribonucleotides from the corresponding ribonucleotides. This Equus caballus (Horse) protein is Ribonucleoside-diphosphate reductase large subunit.